Reading from the N-terminus, the 40-residue chain is Photosystem II reaction center protein J (40 aa).

A helical membrane pass occupies residues 8 to 28 (IPLCLIGTVAGIAVIGLVGVF).

The protein belongs to the PsbJ family. As to quaternary structure, PSII is composed of 1 copy each of membrane proteins PsbA, PsbB, PsbC, PsbD, PsbE, PsbF, PsbH, PsbI, PsbJ, PsbK, PsbL, PsbM, PsbT, PsbX, PsbY, PsbZ, Psb30/Ycf12, at least 3 peripheral proteins of the oxygen-evolving complex and a large number of cofactors. It forms dimeric complexes.

Its subcellular location is the plastid. It localises to the chloroplast thylakoid membrane. In terms of biological role, one of the components of the core complex of photosystem II (PSII). PSII is a light-driven water:plastoquinone oxidoreductase that uses light energy to abstract electrons from H(2)O, generating O(2) and a proton gradient subsequently used for ATP formation. It consists of a core antenna complex that captures photons, and an electron transfer chain that converts photonic excitation into a charge separation. The chain is Photosystem II reaction center protein J from Triticum aestivum (Wheat).